A 74-amino-acid chain; its full sequence is MQLFVRAQELHTLEVTGQETVAQIKAHVASLEGIAPEDQVVLLAGSPLEDEATLGQCGVEALTTLEVAGRMLGG.

This sequence belongs to the ubiquitin family.

The polypeptide is Ubiquitin-like protein FUBI (Fau) (Rattus norvegicus (Rat)).